A 1717-amino-acid polypeptide reads, in one-letter code: PH domain leucine-rich repeat-containing protein phosphatase 1 (1717 aa).

At Met1 the chain carries N-acetylmethionine. Disordered stretches follow at residues 1–25 (MEPA…SAPA), 41–118 (LAAA…GANS), 136–156 (AASS…GAAG), and 252–470 (PGAA…PPPT). The span at 98 to 110 (APQPIAGGAAPVP) shows a compositional bias: low complexity. Residues 262–274 (EPPPEAGPRLAPP) show a composition bias toward pro residues. Low complexity-rich tracts occupy residues 313-325 (SRRA…DSSP) and 333-345 (PVSS…PVVS). Position 317 is a phosphoserine (Ser317). Polar residues-rich tracts occupy residues 346 to 358 (DTES…SAES) and 408 to 417 (QTASSPQPQQ). Ser412 bears the Phosphoserine mark. One can recognise a PH domain in the interval 536–636 (RIQLSGMYNV…WLRQVSKVAS (101 aa)). 21 LRR repeats span residues 638-659 (RISS…LFYS), 661-682 (DLTH…PAAR), 692-712 (KLKS…AVCS), 715-736 (TLAE…VGVM), 738-760 (NLQT…ENMK), 761-783 (QLSY…EKLT), 784-804 (AVDK…QALR), 808-831 (HIKH…DFLQ), 832-853 (HVTQ…IFNN), 873-894 (FLKA…PVPN), 895-916 (YLSY…VCES), 918-939 (KLEV…LFCN), 941-962 (SLRK…LERT), 963-984 (SVEV…LLMK), 987-1008 (SLRF…TLSE), 1013-1033 (ILQE…PLLT), 1037-1058 (HLKI…KMAK), 1061-1082 (ELEE…IMNC), 1084-1105 (RMHT…MQLP), 1106-1127 (EIKC…ENLP), and 1129-1150 (KLQE…TLEL). The interaction with NHERF1 stretch occupies residues 1076–1205 (PTTIMNCRRM…NNFCDNREAL (130 aa)). A PPM-type phosphatase domain is found at 1175 to 1422 (SHGYTEASGV…DSISAVVVQL (248 aa)). 4 residues coordinate Mn(2+): Asp1210, Gly1211, Lys1374, and Asp1413. 2 disordered regions span residues 1458–1510 (DRPS…SPAY) and 1673–1717 (EVKE…DTPL). The segment covering 1468 to 1489 (SSSSGMASEISSELSTSEMSSE) has biased composition (low complexity). Positions 1715–1717 (TPL) match the PDZ-binding; required for interaction with NHERF1 motif.

In terms of assembly, interacts with the nucleotide free form of K-Ras (KRAS) via its LRR repeats. Interacts with AKT2, AKT3, PRKCB isoform beta-II, STK4, RPS6KB1, RAF1. Isoform 1 (predominantly) and isoform 2 interact with BRAP. Interacts with FKBP5; FKBP5 acts as a scaffold for PHLPP1 and Akt. Interacts with SCRIB; SCRIB acts as a scaffold for PHLPP1 and Akt. Interacts with NHERF1; NHERF1 scaffolds a heterotrimeric complex with PTEN at the plasma membrane. Interacts with WDR48 and USP12. It depends on Mn(2+) as a cofactor. In colorectal cancer tissue, expression is highest in the surface epithelium of normal colonic mucosa adjacent to the cancer tissue but is largely excluded from the crypt bases. Expression is lost or significantly decreased in 78% of tested tumors (at protein level). Ubiquitously expressed in non-cancerous tissues.

Its subcellular location is the cytoplasm. The protein localises to the membrane. It is found in the nucleus. The protein resides in the cell membrane. It catalyses the reaction O-phospho-L-seryl-[protein] + H2O = L-seryl-[protein] + phosphate. The enzyme catalyses O-phospho-L-threonyl-[protein] + H2O = L-threonyl-[protein] + phosphate. Its activity is regulated as follows. Insensitive to okadaic acid. Deubiquitination by WDR48-USP12 complex positively regulates PHLPP1 stability. Its function is as follows. Protein phosphatase involved in regulation of Akt and PKC signaling. Mediates dephosphorylation in the C-terminal domain hydrophobic motif of members of the AGC Ser/Thr protein kinase family; specifically acts on 'Ser-473' of AKT2 and AKT3, 'Ser-660' of PRKCB and 'Ser-657' of PRKCA. Isoform 2 seems to have a major role in regulating Akt signaling in hippocampal neurons. Akt regulates the balance between cell survival and apoptosis through a cascade that primarily alters the function of transcription factors that regulate pro- and antiapoptotic genes. Dephosphorylation of 'Ser-473' of Akt triggers apoptosis and suppression of tumor growth. Dephosphorylation of PRKCA and PRKCB leads to their destabilization and degradation. Dephosphorylates STK4 on 'Thr-387' leading to STK4 activation and apoptosis. Dephosphorylates RPS6KB1 and is involved in regulation of cap-dependent translation. Inhibits cancer cell proliferation and may act as a tumor suppressor. Dephosphorylates RAF1 inhibiting its kinase activity. May act as a negative regulator of K-Ras signaling in membrane rafts. Involved in the hippocampus-dependent long-term memory formation. Involved in circadian control by regulating the consolidation of circadian periodicity after resetting. Involved in development and function of regulatory T-cells. In Homo sapiens (Human), this protein is PH domain leucine-rich repeat-containing protein phosphatase 1 (PHLPP1).